A 155-amino-acid polypeptide reads, in one-letter code: SsrA-binding protein (155 aa).

This sequence belongs to the SmpB family.

It is found in the cytoplasm. Functionally, required for rescue of stalled ribosomes mediated by trans-translation. Binds to transfer-messenger RNA (tmRNA), required for stable association of tmRNA with ribosomes. tmRNA and SmpB together mimic tRNA shape, replacing the anticodon stem-loop with SmpB. tmRNA is encoded by the ssrA gene; the 2 termini fold to resemble tRNA(Ala) and it encodes a 'tag peptide', a short internal open reading frame. During trans-translation Ala-aminoacylated tmRNA acts like a tRNA, entering the A-site of stalled ribosomes, displacing the stalled mRNA. The ribosome then switches to translate the ORF on the tmRNA; the nascent peptide is terminated with the 'tag peptide' encoded by the tmRNA and targeted for degradation. The ribosome is freed to recommence translation, which seems to be the essential function of trans-translation. The chain is SsrA-binding protein from Bordetella parapertussis (strain 12822 / ATCC BAA-587 / NCTC 13253).